The following is a 1227-amino-acid chain: Anion exchange protein 3 (1227 aa).

The span at 1-11 (MANGVIPPPGG) shows a compositional bias: pro residues. 3 disordered regions span residues 1 to 256 (MANG…DEAE), 286 to 312 (KPSRIQGGRGSPSGLAPILRRKKKKKK), and 428 to 497 (NDDK…GDGH). The Cytoplasmic portion of the chain corresponds to 1 to 707 (MANGVIPPPG…DLRDALHSQC (707 aa)). The span at 58 to 75 (DPEKPSRSYSERDFEFHR) shows a compositional bias: basic and acidic residues. 2 stretches are compositionally biased toward basic residues: residues 76–97 (HTSHHTHHPLSARLPPPHKLRR) and 104–113 (RHTRRKRKKE). The segment covering 134–152 (AEEEEEEEEEEEGESEAEP) has biased composition (acidic residues). Phosphoserine is present on residues serine 167, serine 170, serine 175, and serine 198. The span at 194–215 (QSDQSPQRSGSSPSPRARASRI) shows a compositional bias: low complexity. Arginine 294 carries the omega-N-methylarginine modification. The segment covering 435–448 (FFPRNPSSSSVNSV) has biased composition (low complexity). Residues 480–497 (HDPDAKEKPLHMPGGDGH) are compositionally biased toward basic and acidic residues. 4 consecutive transmembrane segments (helical) span residues 708–730 (VAAVLFIYFAALSPAITFGGLLG), 736–773 (LMGVSELIVSTAVLGVLFSLLGAQPLLVVGFSGPLLVF), 793–815 (VWVGLWLVVFVLALVAAEGSFLV), and 825–846 (IFAFLISLIFIYETFHKLYKVF). Residues 708–1227 (VAAVLFIYFA…DEYNELHMPV (520 aa)) are membrane (anion exchange). Asparagine 868 is a glycosylation site (N-linked (GlcNAc...) asparagine). Residues 888 to 905 (ALLSLILMLGTFLIAFFL) form a helical membrane-spanning segment. Residues 906–920 (RKFRNSRFLGGKARR) are Cytoplasmic-facing. The next 5 helical transmembrane spans lie at 921–941 (IIGDFGIPISILVMVLVDYSI), 975–997 (PFPPWMMVAAAVPALLVLILIFM), 1023–1044 (LLLIGSLGGLCGLFGLPWLTAA), 1078–1123 (VTGV…IQLS), and 1150–1186 (MHLFTCIQLGCIALLWVVKSTAASLAFPFLLLLTVPL). Cysteine 1160 carries S-palmitoyl cysteine lipidation.

The protein belongs to the anion exchanger (TC 2.A.31) family. Expressed in the brain.

Its subcellular location is the cell membrane. The catalysed reaction is hydrogencarbonate(in) + chloride(out) = hydrogencarbonate(out) + chloride(in). Inhibited by 4,4'-diisothiocyanatostilbene-2,2'-disulfonic acid (DIDS). Sodium-independent anion exchanger which mediates the electroneutral exchange of chloride for bicarbonate ions across the cell membrane. May be involved in the regulation of intracellular pH, and the modulation of cardiac action potential. The chain is Anion exchange protein 3 (Slc4a3) from Mus musculus (Mouse).